Reading from the N-terminus, the 400-residue chain is S-adenosylmethionine synthase (400 aa).

His-17 contributes to the ATP binding site. Position 19 (Asp-19) interacts with Mg(2+). Residue Glu-45 participates in K(+) binding. Glu-58 and Gln-101 together coordinate L-methionine. Residues 101 to 111 form a flexible loop region; sequence QSPDIAMGVDQ. Residues 177–179, 244–245, Asp-253, 259–260, Ala-276, and Lys-280 contribute to the ATP site; these read DGK, RF, and RK. Residue Asp-253 coordinates L-methionine. Position 284 (Lys-284) interacts with L-methionine.

The protein belongs to the AdoMet synthase family. As to quaternary structure, homotetramer; dimer of dimers. It depends on Mg(2+) as a cofactor. The cofactor is K(+).

It localises to the cytoplasm. The enzyme catalyses L-methionine + ATP + H2O = S-adenosyl-L-methionine + phosphate + diphosphate. It participates in amino-acid biosynthesis; S-adenosyl-L-methionine biosynthesis; S-adenosyl-L-methionine from L-methionine: step 1/1. In terms of biological role, catalyzes the formation of S-adenosylmethionine (AdoMet) from methionine and ATP. The overall synthetic reaction is composed of two sequential steps, AdoMet formation and the subsequent tripolyphosphate hydrolysis which occurs prior to release of AdoMet from the enzyme. This Bacillus licheniformis (strain ATCC 14580 / DSM 13 / JCM 2505 / CCUG 7422 / NBRC 12200 / NCIMB 9375 / NCTC 10341 / NRRL NRS-1264 / Gibson 46) protein is S-adenosylmethionine synthase.